The primary structure comprises 442 residues: 26S proteasome non-ATPase regulatory subunit 12 homolog A (442 aa).

A coiled-coil region spans residues 6–137; it reads KLEATIDRLL…EAADLMQEVA (132 aa). Residues 232-403 form the PCI domain; sequence EICRSYKAIY…GIVCFQIAKD (172 aa).

It belongs to the proteasome subunit p55 family. Component of the 19S regulatory particle (RP/PA700) lid subcomplex of the 26S proteasome. The 26S proteasome is composed of a core protease (CP), known as the 20S proteasome, capped at one or both ends by the 19S regulatory particle (RP/PA700). The RP/PA700 complex is composed of at least 17 different subunits in two subcomplexes, the base and the lid, which form the portions proximal and distal to the 20S proteolytic core, respectively. Ubiquitous with highest expression in flowers.

The protein localises to the cytoplasm. The protein resides in the nucleus. Acts as a regulatory subunit of the 26 proteasome which is involved in the ATP-dependent degradation of ubiquitinated proteins. Required for gametogenesis and sporophyte development. Acts redundantly with RPN5B. This is 26S proteasome non-ATPase regulatory subunit 12 homolog A (RPN5A) from Arabidopsis thaliana (Mouse-ear cress).